The chain runs to 328 residues: GTPase Obg (328 aa).

Positions 1 to 159 (MNFIDEVKIY…MWVQLSLKLL (159 aa)) constitute an Obg domain. Residues 160-327 (SDVGLVGLPN…IIKLALQTIK (168 aa)) form the OBG-type G domain. GTP is bound by residues 166–173 (GLPNAGKS), 191–195 (FTTLV), 212–215 (DIPG), 279–282 (NKID), and 308–310 (STY). The Mg(2+) site is built by S173 and T193.

It belongs to the TRAFAC class OBG-HflX-like GTPase superfamily. OBG GTPase family. In terms of assembly, monomer. It depends on Mg(2+) as a cofactor.

It localises to the cytoplasm. Its function is as follows. An essential GTPase which binds GTP, GDP and possibly (p)ppGpp with moderate affinity, with high nucleotide exchange rates and a fairly low GTP hydrolysis rate. Plays a role in control of the cell cycle, stress response, ribosome biogenesis and in those bacteria that undergo differentiation, in morphogenesis control. This chain is GTPase Obg, found in Rickettsia bellii (strain RML369-C).